The chain runs to 34 residues: Potassium channel toxin alpha-KTx 18.2 (34 aa).

3 cysteine pairs are disulfide-bonded: Cys-7-Cys-26, Cys-12-Cys-31, and Cys-16-Cys-33.

Expressed by the venom gland.

The protein localises to the secreted. Reversibly blocks Shaker B potassium channels. The chain is Potassium channel toxin alpha-KTx 18.2 from Tityus discrepans (Venezuelan scorpion).